We begin with the raw amino-acid sequence, 323 residues long: Prostaglandin F synthase 2 (323 aa).

Residues 20–24 (GFGTY) and Asp50 contribute to the NADP(+) site. The Proton donor role is filled by Tyr55. His117 serves as a coordination point for substrate. NADP(+) is bound by residues 166–167 (SN), Gln190, 216–221 (YAALGA), and 270–280 (KSFNKKRIKEN).

It belongs to the aldo/keto reductase family. Monomer.

Its subcellular location is the cytoplasm. It carries out the reaction prostaglandin F2alpha + NADP(+) = prostaglandin D2 + NADPH + H(+). It functions in the pathway lipid metabolism; prostaglandin biosynthesis. Functionally, catalyzes the reduction of PGD(2) and PGH(2) to PGF(2 alpha) and a stereoisomer, respectively. It has a broad substrate specificity and also reduces other carbonyl compounds. The protein is Prostaglandin F synthase 2 of Bos taurus (Bovine).